The primary structure comprises 31 residues: Cytochrome b6-f complex subunit 6 (31 aa).

The chain crosses the membrane as a helical span at residues 4-24 (ITSYFGFLLAALTITSALLIG).

The protein belongs to the PetL family. In terms of assembly, the 4 large subunits of the cytochrome b6-f complex are cytochrome b6, subunit IV (17 kDa polypeptide, PetD), cytochrome f and the Rieske protein, while the 4 small subunits are PetG, PetL, PetM and PetN. The complex functions as a dimer.

Its subcellular location is the plastid. It localises to the chloroplast thylakoid membrane. Its function is as follows. Component of the cytochrome b6-f complex, which mediates electron transfer between photosystem II (PSII) and photosystem I (PSI), cyclic electron flow around PSI, and state transitions. PetL is important for photoautotrophic growth as well as for electron transfer efficiency and stability of the cytochrome b6-f complex. The chain is Cytochrome b6-f complex subunit 6 from Piper cenocladum (Ant piper).